Reading from the N-terminus, the 694-residue chain is Polyphosphate kinase (694 aa).

Asparagine 45 contributes to the ATP binding site. Mg(2+) is bound by residues arginine 367 and arginine 397. The Phosphohistidine intermediate role is filled by histidine 427. 3 residues coordinate ATP: tyrosine 460, arginine 553, and histidine 580.

It belongs to the polyphosphate kinase 1 (PPK1) family. Mg(2+) is required as a cofactor. In terms of processing, an intermediate of this reaction is the autophosphorylated ppk in which a phosphate is covalently linked to a histidine residue through a N-P bond.

The catalysed reaction is [phosphate](n) + ATP = [phosphate](n+1) + ADP. Catalyzes the reversible transfer of the terminal phosphate of ATP to form a long-chain polyphosphate (polyP). The protein is Polyphosphate kinase of Campylobacter jejuni subsp. jejuni serotype O:6 (strain 81116 / NCTC 11828).